Consider the following 227-residue polypeptide: Glutathione S-transferase U13 (227 aa).

The 82-residue stretch at 5-86 folds into the GST N-terminal domain; that stretch reads DTVKLIGSWS…YVDEAWPSVP (82 aa). Glutathione-binding positions include 15–16, 43–44, 57–58, and 70–71; these read SP, EK, KV, and ES. The GST C-terminal domain occupies 92–224; the sequence is DAYDRASARF…EVVAFAKQKF (133 aa). Thr-158 carries the post-translational modification Phosphothreonine.

This sequence belongs to the GST superfamily. Tau family.

Its subcellular location is the cytoplasm. It localises to the cytosol. It carries out the reaction RX + glutathione = an S-substituted glutathione + a halide anion + H(+). Functionally, in vitro, possesses glutathione S-transferase activity toward 1-chloro-2,4-dinitrobenzene (CDNB) and benzyl isothiocyanate (BITC). May be involved in the conjugation of reduced glutathione to a wide number of exogenous and endogenous hydrophobic electrophiles and have a detoxification role against certain herbicides. This chain is Glutathione S-transferase U13 (GSTU13), found in Arabidopsis thaliana (Mouse-ear cress).